The sequence spans 993 residues: Isoleucine--tRNA ligase (993 aa).

The short motif at 64–74 is the 'HIGH' region element; sequence PYANGNIHIGH. Glutamate 621 provides a ligand contact to L-isoleucyl-5'-AMP. Positions 662–666 match the 'KMSKS' region motif; it reads KMSKS. Lysine 665 contributes to the ATP binding site.

The protein belongs to the class-I aminoacyl-tRNA synthetase family. IleS type 1 subfamily. Monomer.

The protein localises to the cytoplasm. The enzyme catalyses tRNA(Ile) + L-isoleucine + ATP = L-isoleucyl-tRNA(Ile) + AMP + diphosphate. Catalyzes the attachment of isoleucine to tRNA(Ile). As IleRS can inadvertently accommodate and process structurally similar amino acids such as valine, to avoid such errors it has two additional distinct tRNA(Ile)-dependent editing activities. One activity is designated as 'pretransfer' editing and involves the hydrolysis of activated Val-AMP. The other activity is designated 'posttransfer' editing and involves deacylation of mischarged Val-tRNA(Ile). The sequence is that of Isoleucine--tRNA ligase from Mesorhizobium japonicum (strain LMG 29417 / CECT 9101 / MAFF 303099) (Mesorhizobium loti (strain MAFF 303099)).